Here is a 465-residue protein sequence, read N- to C-terminus: Chromosomal replication initiator protein DnaA (465 aa).

Residues 1–80 form a domain I, interacts with DnaA modulators region; sequence MLWTDCLTRL…VEILVDSRPG (80 aa). Positions 80 to 127 are domain II; sequence GAILSPAEQPATTTAALSSTPVVPQRVKKEVVEPAATQSNKILNSKKR. Residues 128–345 form a domain III, AAA+ region region; that stretch reads LLNPLFTFSL…GALNKVVAIA (218 aa). Residues Gly173, Gly175, Lys176, and Thr177 each contribute to the ATP site. Residues 346–465 form a domain IV, binds dsDNA region; it reads RFKGSQIDLD…YKNLLRLLQS (120 aa).

Belongs to the DnaA family. In terms of assembly, oligomerizes as a right-handed, spiral filament on DNA at oriC.

Its subcellular location is the cytoplasm. Plays an essential role in the initiation and regulation of chromosomal replication. ATP-DnaA binds to the origin of replication (oriC) to initiate formation of the DNA replication initiation complex once per cell cycle. Binds the DnaA box (a 9 base pair repeat at the origin) and separates the double-stranded (ds)DNA. Forms a right-handed helical filament on oriC DNA; dsDNA binds to the exterior of the filament while single-stranded (ss)DNA is stabiized in the filament's interior. The ATP-DnaA-oriC complex binds and stabilizes one strand of the AT-rich DNA unwinding element (DUE), permitting loading of DNA polymerase. After initiation quickly degrades to an ADP-DnaA complex that is not apt for DNA replication. Binds acidic phospholipids. The protein is Chromosomal replication initiator protein DnaA of Acinetobacter baylyi (strain ATCC 33305 / BD413 / ADP1).